Reading from the N-terminus, the 231-residue chain is Orotidine 5'-phosphate decarboxylase (231 aa).

Residues aspartate 11, lysine 34, 61–70 (DLKLHDIPNT), threonine 117, arginine 179, glutamine 188, glycine 208, and arginine 209 each bind substrate. Lysine 63 functions as the Proton donor in the catalytic mechanism.

It belongs to the OMP decarboxylase family. Type 1 subfamily. Homodimer.

It carries out the reaction orotidine 5'-phosphate + H(+) = UMP + CO2. It participates in pyrimidine metabolism; UMP biosynthesis via de novo pathway; UMP from orotate: step 2/2. Its function is as follows. Catalyzes the decarboxylation of orotidine 5'-monophosphate (OMP) to uridine 5'-monophosphate (UMP). In Streptococcus thermophilus (strain CNRZ 1066), this protein is Orotidine 5'-phosphate decarboxylase.